The primary structure comprises 612 residues: 1,8-cineole synthase, chloroplastic (612 aa).

A chloroplast-targeting transit peptide spans methionine 1–threonine 52. Positions 363, 367, and 515 each coordinate Mg(2+). The DDXXD motif motif lies at aspartate 363–aspartate 367.

Belongs to the terpene synthase family. Tpsd subfamily. It depends on Mg(2+) as a cofactor. Requires Mn(2+) as cofactor.

The protein localises to the plastid. It is found in the chloroplast. The catalysed reaction is (2E)-geranyl diphosphate + H2O = 1,8-cineole + diphosphate. The protein operates within terpene metabolism; oleoresin biosynthesis. Its function is as follows. Terpene synthase (TPS) involved in the biosynthesis of monoterpene natural products included in conifer oleoresin secretions and volatile emissions; these compounds contribute to biotic and abiotic stress defense against herbivores and pathogens. Catalyzes the conversion of (2E)-geranyl diphosphate (GPP) to 1,8-cineole. The protein is 1,8-cineole synthase, chloroplastic of Picea sitchensis (Sitka spruce).